The following is a 773-amino-acid chain: MSNSEPSTSTPSGKTKKRGKKCETSMGKSKKSKNLPRFVKIQPIFSSEKIKETVCEQGIEECKRMLKGHFNAIKDDYDIRVKDELDTDIKDWLKDASSSVNEYRRRLQENLGEGRTIAKFSFKNCEKYEENDYKVSDSTVTWIKPDRTEEGDLMKKFRAPCSRIEVGDISPPMIYWVPIEQSVATPDQLRLTHMPYFGDGIDDGNIYEHLIDMFPDGIHGFSDNWSYVNDWILYKLCRAALKDYQGSPDVFYYTLYRLWPNKSSQREFSSAFPVLCENFAEKGFDPSSLEPWKKTKIAEGAQNLRNPTCYACLAYTCAIHGFKAEIPIEFPNGEFYNAMLPLPNNPENDGKMCSGNCWKSVTMKEVSEVLVPDSEEILQKEVKIYFMKSRIAKMPIEDGALIVNIYVFNTYIPFCEFVKKYVDEDDEESKIRSCRDAYHLMMSMAENVSARRLKMGQPSNRLSIKDRVNNFRRNQLSQEKAKRKLRHDSLRIQALRDGLDAEKLIREDDMRDSQRNSEKVRMTAVTPITACRHAGPCNATAENCACRENGVCSYMCKCDINCSQRFPGCNCAAGQCYTKACQCYRANWECNPMTCNMCKCDAIDSNIIKCRNFGMTRMIQKRTYCGPSKIAGNGLFLLEPAEKDEFITEYTGERISDDEAERRGAIYDRYQCSYIFNIETGGAIDSYKIGNLARFANHDSKNPTCYARTMVVAGEHRIGFYAKRRLEISEELTFDYSYSGEHQIAFRMVQTKERSEKPSRPKSQKLSKPMTSE.

Over residues Met-1–Gly-13 the composition is skewed to polar residues. The disordered stretch occupies residues Met-1–Lys-33. Residues Met-1–Met-194 form an interaction with mes-6 region. Residues Ile-505 to Gly-614 enclose the CXC domain. Positions Thr-616–Ser-737 constitute an SET domain. Positions Val-749 to Glu-773 are disordered. The segment covering Gln-750 to Ser-759 has biased composition (basic and acidic residues).

Belongs to the class V-like SAM-binding methyltransferase superfamily. Histone-lysine methyltransferase family. EZ subfamily. Interacts directly with mes-6 via its N-terminal domain. Forms a heterotrimeric complex with mes-3 and mes-6. Does not interact with mes-4. In terms of tissue distribution, in adults, it is predominantly expressed in the germline, and weakly expressed in intestinal cells. Expressed in the hypoderm.

Its subcellular location is the nucleus. The enzyme catalyses L-lysyl(27)-[histone H3] + 3 S-adenosyl-L-methionine = N(6),N(6),N(6)-trimethyl-L-lysyl(27)-[histone H3] + 3 S-adenosyl-L-homocysteine + 3 H(+). In terms of biological role, polycomb group (PcG) protein. Catalytic subunit of a the mes-2/mes-3/mes-6 complex, which methylates 'Lys-27' of histone H3, leading to transcriptional repression of the affected target genes. PcG proteins act by forming multiprotein complexes, which are required to maintain the transcriptionally repressive state of homeotic genes throughout development. In association with the nfya-1-NF-Y complex, may play a role in repressing the expression of the homeobox protein egl-5 in tissues such as the head. PcG proteins are not required to initiate repression, but to maintain it during later stages of development. The mes-2/mes-3/mes-6 complex may participate in the global inactivation of the X chromosomes in germline cells. This complex is required to exclude mes-4 from the inactivated X-chromosomes in germline cells. Required for small-RNA-induced H3K27 trimethylation. Involved in the negative regulation of lifespan in a germline-independent fashion. The chain is Histone-lysine N-methyltransferase mes-2 from Caenorhabditis elegans.